The sequence spans 104 residues: Small ribosomal subunit protein uS10 (104 aa).

The protein belongs to the universal ribosomal protein uS10 family. Part of the 30S ribosomal subunit.

Functionally, involved in the binding of tRNA to the ribosomes. This chain is Small ribosomal subunit protein uS10, found in Buchnera aphidicola subsp. Baizongia pistaciae (strain Bp).